The sequence spans 485 residues: Carbohydrate sulfotransferase 7 (485 aa).

The Cytoplasmic portion of the chain corresponds to 1–12 (MKGRRRRRREYC). A helical; Signal-anchor for type II membrane protein membrane pass occupies residues 13-33 (KFTLLLALYTLLLLLVPSVLD). The Lumenal portion of the chain corresponds to 34–485 (SGSEQDKGGR…PLETNANWAT (452 aa)). The tract at residues 66–88 (EQGAEVRFQAEGNPDRSPRPQGN) is disordered. Asn88 carries an N-linked (GlcNAc...) asparagine glycan. 109–115 (WRTGSSF) contacts 3'-phosphoadenylyl sulfate. An N-linked (GlcNAc...) asparagine glycan is attached at Asn185. Residue 277 to 285 (RDPRAVHNS) participates in 3'-phosphoadenylyl sulfate binding. Asn406 is a glycosylation site (N-linked (GlcNAc...) asparagine). Ser461 carries the post-translational modification Phosphoserine. The segment covering 465 to 475 (RDVKTVRKGET) has biased composition (basic and acidic residues). Residues 465–485 (RDVKTVRKGETPLETNANWAT) are disordered.

The protein belongs to the sulfotransferase 1 family. Gal/GlcNAc/GalNAc subfamily.

The protein resides in the golgi apparatus membrane. It catalyses the reaction chondroitin beta-D-glucuronate + n 3'-phosphoadenylyl sulfate = chondroitin 6'-sulfate + n adenosine 3',5'-bisphosphate + n H(+). Functionally, sulfotransferase that utilizes 3'-phospho-5'-adenylyl sulfate (PAPS) as sulfonate donor to catalyze the transfer of sulfate to position 6 of non-reducing N-acetylglucosamine (GlcNAc) residues. Preferentially acts on mannose-linked GlcNAc. Also able to catalyze the transfer of sulfate to position 6 of the N-acetylgalactosamine (GalNAc) residue of chondroitin. Also acts on core 2 mucin-type oligosaccharide and N-acetyllactosamine oligomer with a lower efficiency. Has weak or no activity toward keratan sulfate and oligosaccharides containing the Galbeta1-4GlcNAc. Catalyzes 6-O-sulfation of beta-benzyl GlcNAc but not alpha- or beta-benzyl GalNAc. The polypeptide is Carbohydrate sulfotransferase 7 (Chst7) (Rattus norvegicus (Rat)).